Consider the following 20-residue polypeptide: Venom peptide Ocy8 (20 aa).

Expressed by the venom gland.

It is found in the secreted. The sequence is that of Venom peptide Ocy8 from Opisthacanthus cayaporum (South American scorpion).